A 509-amino-acid chain; its full sequence is ATP synthase subunit alpha (509 aa).

Position 169–176 (169–176 (GDRQTGKT)) interacts with ATP.

The protein belongs to the ATPase alpha/beta chains family. As to quaternary structure, F-type ATPases have 2 components, CF(1) - the catalytic core - and CF(0) - the membrane proton channel. CF(1) has five subunits: alpha(3), beta(3), gamma(1), delta(1), epsilon(1). CF(0) has three main subunits: a(1), b(2) and c(9-12). The alpha and beta chains form an alternating ring which encloses part of the gamma chain. CF(1) is attached to CF(0) by a central stalk formed by the gamma and epsilon chains, while a peripheral stalk is formed by the delta and b chains.

It localises to the cell inner membrane. It carries out the reaction ATP + H2O + 4 H(+)(in) = ADP + phosphate + 5 H(+)(out). Functionally, produces ATP from ADP in the presence of a proton gradient across the membrane. The alpha chain is a regulatory subunit. The protein is ATP synthase subunit alpha of Methylorubrum populi (strain ATCC BAA-705 / NCIMB 13946 / BJ001) (Methylobacterium populi).